The primary structure comprises 938 residues: Mediator of RNA polymerase II transcription subunit 16 (938 aa).

It belongs to the Mediator complex subunit 16 family. In terms of assembly, component of the Mediator complex.

It is found in the nucleus. Its function is as follows. Component of the Mediator complex, a coactivator involved in the regulated transcription of nearly all RNA polymerase II-dependent genes. Mediator functions as a bridge to convey information from gene-specific regulatory proteins to the basal RNA polymerase II transcription machinery. Mediator is recruited to promoters by direct interactions with regulatory proteins and serves as a scaffold for the assembly of a functional preinitiation complex with RNA polymerase II and the general transcription factors. This Eremothecium gossypii (strain ATCC 10895 / CBS 109.51 / FGSC 9923 / NRRL Y-1056) (Yeast) protein is Mediator of RNA polymerase II transcription subunit 16 (SIN4).